The chain runs to 692 residues: SH3 domain-containing protein 21 (692 aa).

The tract at residues methionine 1 to tyrosine 60 is disordered. Residues serine 65–proline 126 enclose the SH3 domain. Disordered stretches follow at residues proline 132 to proline 501, proline 536 to threonine 605, and valine 672 to tyrosine 692. Positions proline 177–serine 186 are enriched in basic and acidic residues. A compositionally biased stretch (polar residues) spans threonine 210–serine 220. 3 stretches are compositionally biased toward basic and acidic residues: residues valine 378–glutamine 396, asparagine 490–proline 501, and serine 542–valine 582. Positions serine 628–lysine 678 form a coiled coil. The span at methionine 673–tyrosine 692 shows a compositional bias: polar residues.

In Macaca fascicularis (Crab-eating macaque), this protein is SH3 domain-containing protein 21 (SH3D21).